The primary structure comprises 537 residues: Intercellular adhesion molecule 1 (537 aa).

The first 27 residues, 1–27 (MASTRAKPTLPLLLALVTVVIPGPGDA), serve as a signal peptide directing secretion. Residues 28 to 485 (QVSIHPREAF…LTVLYHSQNN (458 aa)) lie on the Extracellular side of the membrane. 2 consecutive Ig-like C2-type domains span residues 41 to 102 (GGSV…QSSA) and 127 to 195 (GKDL…LDLR). An N-linked (GlcNAc...) asparagine glycan is attached at asparagine 47. 3 disulfides stabilise this stretch: cysteine 48/cysteine 91, cysteine 52/cysteine 95, and cysteine 134/cysteine 188. A Cell attachment site; atypical motif is present at residues 151–153 (RGE). The short motif at 179 to 181 (RGD) is the Cell attachment site element. Residues asparagine 185, asparagine 204, asparagine 267, asparagine 311, asparagine 362, asparagine 388, asparagine 409, asparagine 456, and asparagine 469 are each glycosylated (N-linked (GlcNAc...) asparagine). The region spanning 232–299 (GTQQKLFCSL…LRCVLELADQ (68 aa)) is the Ig-like C2-type 3 domain. Cysteine 239 and cysteine 292 are disulfide-bonded. The Ig-like C2-type 4 domain occupies 327 to 381 (GSQVTVKCEAHSGSKVVLLSGVEPRPPTPQVQFTLNASSEDHKRSFFCSAALEVA). The cysteines at positions 334 and 374 are disulfide-linked. 3 disulfide bridges follow: cysteine 406-cysteine 422, cysteine 422-cysteine 461, and cysteine 434-cysteine 461. One can recognise an Ig-like C2-type 5 domain in the interval 415–468 (GSQQTLKCQAWGNPSPKMTCRRKADGALLPIGVVKSVKQEMNGTYVCHAFSSHG). The chain crosses the membrane as a helical span at residues 486–509 (WTIIILVPVLLVIVGLVMAASYVY). At 510–537 (NRQRKIRIYKLQKAQEEAIKLKGQAPPP) the chain is on the cytoplasmic side.

The protein belongs to the immunoglobulin superfamily. ICAM family. In terms of assembly, homodimer. Interacts with MUC1 and promotes cell aggregation in epithelial cells. Interacts with ARHGEF26/SGEF. Interacts (on T cell side) with CD81, CD247 and CD9 at immunological synapses between antigen-presenting cells and T cells. In terms of processing, monoubiquitinated, which is promoted by MARCH9 and leads to endocytosis. As to expression, expressed at low level on a subpopulation of lymphocytes, macrophages, and endothelial cells, but is strongly induced on these cells, and on fibroblasts and epithelial cells.

It is found in the membrane. In terms of biological role, ICAM proteins are ligands for the leukocyte adhesion protein LFA-1 (integrin alpha-L/beta-2). During leukocyte trans-endothelial migration, ICAM1 engagement promotes the assembly of endothelial apical cups through ARHGEF26/SGEF and RHOG activation. The protein is Intercellular adhesion molecule 1 (Icam1) of Mus musculus (Mouse).